Consider the following 328-residue polypeptide: tRNA U34 carboxymethyltransferase (328 aa).

Carboxy-S-adenosyl-L-methionine-binding positions include Lys-91, Trp-105, Lys-110, Gly-130, 152–154, Met-196, Tyr-200, and Arg-315; that span reads DPS.

It belongs to the class I-like SAM-binding methyltransferase superfamily. CmoB family. Homotetramer.

The enzyme catalyses carboxy-S-adenosyl-L-methionine + 5-hydroxyuridine(34) in tRNA = 5-carboxymethoxyuridine(34) in tRNA + S-adenosyl-L-homocysteine + H(+). Its function is as follows. Catalyzes carboxymethyl transfer from carboxy-S-adenosyl-L-methionine (Cx-SAM) to 5-hydroxyuridine (ho5U) to form 5-carboxymethoxyuridine (cmo5U) at position 34 in tRNAs. The protein is tRNA U34 carboxymethyltransferase of Psychromonas ingrahamii (strain DSM 17664 / CCUG 51855 / 37).